An 87-amino-acid chain; its full sequence is Large ribosomal subunit protein bL31B (87 aa).

It belongs to the bacterial ribosomal protein bL31 family. Type B subfamily. In terms of assembly, part of the 50S ribosomal subunit.

This Burkholderia thailandensis (strain ATCC 700388 / DSM 13276 / CCUG 48851 / CIP 106301 / E264) protein is Large ribosomal subunit protein bL31B.